Consider the following 195-residue polypeptide: Calcium channel flower (195 aa).

The next 3 helical transmembrane spans lie at leucine 34–isoleucine 54, isoleucine 66–glutamate 88, and isoleucine 117–valine 137.

It belongs to the calcium channel flower family. In terms of assembly, homomultimer. Associates with the dally/ magu complex.

It is found in the cell membrane. It localises to the cytoplasmic vesicle. The protein resides in the secretory vesicle. The protein localises to the synaptic vesicle membrane. Its subcellular location is the presynaptic cell membrane. It is found in the endosome. Its activity is regulated as follows. Channel activity is inhibited by La(3+), which reduces Ca(2+) influx and thus inhibits it's function in promoting activity-dependent bulk endocytosis (ADBE) in response to high stimuli. In terms of biological role, transmembrane protein which mediates synaptic endocytosis, fitness-based cell culling, neuronal culling, morphogen gradient scaling, and calcium transport. Regulates synaptic endocytosis and hence couples exo- with endocytosis. Controls two major modes of synaptic vesicle (SV) endocytosis in the synaptic boutons of neuromuscular junctions (NMJs); Ca(2+) channel-independent Clathrin-mediated endocytosis (CME) in response to mild stimulation, and Ca(2+) channel-dependent activity-dependent bulk endocytosis (ADBE) in response to strong stimulation. Functions in ADBE and subsequent SV reformation from bulk endosomes by initiating Ca(2+) channel-dependent phosphatidylinositol 4,5-bisphosphate (PtdIns(4,5)P2) compartmentalization in synaptic boutons. There it acts at the periactive zone to provide the low Ca(2+) levels required to initiate Calcineurin activation and upregulate PtdIns(4,5)P2. Conversely PtdIns(4,5)P2 enhances fwe Ca(2+) channel-activity, establishing a positive feedback loop that induces PtdIns(4,5)P2 microdomain at the periactive zone. These microdomains trigger bulk membrane invagination (i.e. ADBE) by triggering actin polymerization while also promoting localization of fwe to bulk endosomes, thereby removing the ADBE trigger to reduce endocytosis and prevent excess membrane uptake. PtdIns(4,5)P2 then promotes SV reformation from the bulk endosomes, to coordinate ADBE and subsequent SV reformation. Different combinations of the flower isoforms at the cell membrane are also required for the identification and elimination of suboptimal or supernumerary cells during development, regeneration, and adulthood. Required for the recognition and elimination of unfit cells in the developing wing during cell competition. In the developing pupal retina, mediates the elimination of unwanted postmitotic neurons, including supernumerary photoreceptor neurons that form at the periphery of the retina and are contained within incomplete ommatidia units. Also required for efficient elimination and replacement of old neurons by newly generated neurons during regeneration in the adult brain following mechanical injury. Downstream of the flower fitness fingerprints, cells identified as unwanted or unfit are eliminated via apoptosis through the expression of ahuizotl (azot). However, the cells marked for elimination by the flower isoforms only undergo apoptosis if additional thresholds are met; (1) their neighboring fit/healthy cells express different levels of the fwe isoforms, and (2) the levels of the protective signal SPARC expressed by the loser or unwanted cells are unable to inhibit caspase activation. These additional thresholds for flower-mediated apoptosis, allows useful cells to recover from transient and limited stress before they are unnecessarily eliminated. Functions with dally and magu in a mechanism of scaling, which utilises apoptosis to ensure that the dpp morphogen gradient, which mediates organ growth, remains proportional to the size of the growing wing. In this mechanism, fwe represses dally- and Magu-dependent activity in expanding the gradient, and dally/Magu inhibits fwe-dependent apoptosis to keep cell death rate low. When the levels of these different proteins are optimally regulated the gradient correctly scales with organ growth but when this fails, fwe-mediated apoptosis is activated to trim the developing tissue to match the correct size of the gradient. The sequence is that of Calcium channel flower from Drosophila ananassae (Fruit fly).